A 70-amino-acid polypeptide reads, in one-letter code: Conotoxin Lt3.4 (70 aa).

The signal sequence occupies residues 1-24; that stretch reads MLKMGVLLFTFLVLFPLAMFQLDA. A propeptide spanning residues 25-54 is cleaved from the precursor; sequence DQPVERYAENKQDLNRDERMKIMLSALRQR. At Gln-55 the chain carries Pyrrolidone carboxylic acid. 3 disulfides stabilise this stretch: Cys-56-Cys-68, Cys-57-Cys-66, and Cys-62-Cys-69.

This sequence belongs to the conotoxin M superfamily. In terms of tissue distribution, expressed by the venom duct.

Its subcellular location is the secreted. The protein is Conotoxin Lt3.4 of Conus litteratus (Lettered cone).